The following is a 179-amino-acid chain: Large ribosomal subunit protein uL5 (179 aa).

The protein belongs to the universal ribosomal protein uL5 family. As to quaternary structure, part of the 50S ribosomal subunit; part of the 5S rRNA/L5/L18/L25 subcomplex. Contacts the 5S rRNA and the P site tRNA. Forms a bridge to the 30S subunit in the 70S ribosome.

This is one of the proteins that bind and probably mediate the attachment of the 5S RNA into the large ribosomal subunit, where it forms part of the central protuberance. In the 70S ribosome it contacts protein S13 of the 30S subunit (bridge B1b), connecting the 2 subunits; this bridge is implicated in subunit movement. Contacts the P site tRNA; the 5S rRNA and some of its associated proteins might help stabilize positioning of ribosome-bound tRNAs. The chain is Large ribosomal subunit protein uL5 from Nitrosomonas europaea (strain ATCC 19718 / CIP 103999 / KCTC 2705 / NBRC 14298).